The chain runs to 348 residues: Nuclear receptor subfamily 1 group I member 3 (348 aa).

The segment at residues 8–83 is a DNA-binding region (nuclear receptor); the sequence is PRSCMVCGDR…AGMKKEMILS (76 aa). Residues 11 to 31 form an NR C4-type zinc finger; sequence CMVCGDRATGYHFHALTCEGC. Thr38 carries the phosphothreonine; by PKC modification. Residues 47–71 form an NR C4-type zinc finger; it reads CPFAGNCKVNKAQRRHCPACRLQKC. The region spanning 109–348 is the NR LBD domain; the sequence is GQQELVQTLL…MMPLLQEICS (240 aa).

This sequence belongs to the nuclear hormone receptor family. NR1 subfamily. In terms of assembly, heterodimer of NR1I3 and RXR. Interacts with PSMC4. Interacts with ECT2. Directly interacts with DNAJC7; this complex may also include HSP90. Interacts with CRY1. Interacts with CRY2 in a ligand-dependent manner. In terms of processing, phosphorylated at Thr-38 by PKC, dephosphorylation of Thr-38 is required for nuclear translocation and activation.

It localises to the nucleus. Its subcellular location is the cytoplasm. It is found in the cytoskeleton. In terms of biological role, binds and transactivates the retinoic acid response elements that control expression of the retinoic acid receptor beta 2 and alcohol dehydrogenase 3 genes. Transactivates both the phenobarbital responsive element module of the human CYP2B6 gene and the CYP3A4 xenobiotic response element. This is Nuclear receptor subfamily 1 group I member 3 (NR1I3) from Callorhinus ursinus (Northern fur seal).